We begin with the raw amino-acid sequence, 130 residues long: Large ribosomal subunit protein bL20 (130 aa).

It belongs to the bacterial ribosomal protein bL20 family.

In terms of biological role, binds directly to 23S ribosomal RNA and is necessary for the in vitro assembly process of the 50S ribosomal subunit. It is not involved in the protein synthesizing functions of that subunit. The polypeptide is Large ribosomal subunit protein bL20 (Clavibacter sepedonicus (Clavibacter michiganensis subsp. sepedonicus)).